The primary structure comprises 465 residues: Probable inactive receptor-like kinase BSK12 (465 aa).

Residues 1–12 show a composition bias toward polar residues; that stretch reads MGCCYSLSSTVD. Residues 1–34 are disordered; it reads MGCCYSLSSTVDPVQDHTTDASSEPRNGGGEDPP. Glycine 2 carries N-myristoyl glycine lipidation. 2 S-palmitoyl cysteine lipidation sites follow: cysteine 3 and cysteine 4. Residues 50 to 291 form the Protein kinase domain; sequence FSPENIVSDQ…KEIVATLETL (242 aa). Residues 56 to 64 and lysine 78 contribute to the ATP site; that span reads VSDQTSDVV.

It belongs to the protein kinase superfamily. Ser/Thr protein kinase family. Interacts with YDA. Diacylation-mediated membrane association is essential for BSK12 function. As to expression, expressed at the mRNA level in the sperm cells in mature pollen, but the protein is only detectable in the zygote and the micropylar endosperm upon fertilization.

It is found in the cell membrane. Probable inactive protein kinase that activates the YODA MAP kinase cascade, which regulates the asymmetric first division and embryo polarity, by promoting the elongation of the zygote and the development of its basal daughter cell into the extra-embryonic suspensor. Acts as an adapter at the plasma membrane, possibly by recruiting and binding an activator. The sequence is that of Probable inactive receptor-like kinase BSK12 from Arabidopsis thaliana (Mouse-ear cress).